We begin with the raw amino-acid sequence, 854 residues long: MGVRGLTSYIAQRAEIYLKPHELHSTALVIDGDNLSCNLYKDVTGSYSAFGGDYDDFYRAVVQFFQVLAECNIRPYVLMDGGYEERKLRTVSTRLRNKISVIKKINPNASITLFPLHLKEVFVDAVRDCGVPVMRCVFEADDELAALARKLNCPVLSYDSDFYIHNVKYIPLITLTVKVLTKQVKDKNSSNQKDSRDLRHCEAKNVKKRTRANKIVTGIQTTGLTASTKGSSKTYKYLDCCIYRVSHLCGRGTLSPEKLPLFAALLGNDYIARSAFKNFFAAGMGKAGRSRKLKLQQKRIQVILTWLKEETAESALAKVLSRLKKNQRDSLVSQVNAAISGYSNELCHAYDYFDEHYENAFPYIEPVSEEECSDDEHSSSSDEKFSDVEEGEDQEEADNQDEEQQEENQDVDSGDEEEEEADEGLELEVEDKTLLFPQWFLDKLYPAHLPRSFVDLMHLRKYINNPQIEHFPFHDSNEVALPILNYVFALLHHVECEKIELPLEVDMDIEGSTVPYLTYLTRALRVTNVRYFKMPIEKKPAYPFDPLSPDARHLRAVFEDNAPNADTEKLFSKLDQLPEDLRLYFLAIIYWLHRSEHCDLLHLHSLILSLVVLRTIDVTIPAEREVKTFLKRFGKTLKAERAVRDKEAAEGIKRGIKPALLELSVPDRMAHVPKSDCYLTQERLLPHFHMQEIFKKKFDLYSTTVIHAFAEFQAVVYQLNGLNSLLDFPLLSPRMNQLYCGAFLYNMYDVLRNRADVRYHVENFLLPDSKLMFDFYCYLYDWCAEFIPTWKRLEVDPTAAKALQKKRLKKQRQAARKVELREAIADPNAEMVEDADPENDFFDLNNKFCALKVA.

Residues 368–427 (SEEECSDDEHSSSSDEKFSDVEEGEDQEEADNQDEEQQEENQDVDSGDEEEEEADEGLEL) are disordered. Residues 375–387 (DEHSSSSDEKFSD) show a composition bias toward basic and acidic residues. Over residues 388-427 (VEEGEDQEEADNQDEEQQEENQDVDSGDEEEEEADEGLEL) the composition is skewed to acidic residues.

This sequence belongs to the asteroid family. In terms of tissue distribution, expressed in the proliferative tissues of embryos and in the mitotically active tissue anterior to the morphogenetic furrow in eye imaginal disks.

Functionally, may function in EGF receptor signaling. May play a role in compound eye morphogenesis. This Drosophila melanogaster (Fruit fly) protein is Protein asteroid (ast).